The sequence spans 561 residues: Arginine--tRNA ligase (561 aa).

The 'HIGH' region signature appears at 129–139 (ANPTGPLHVGH).

This sequence belongs to the class-I aminoacyl-tRNA synthetase family. Monomer.

It is found in the cytoplasm. The catalysed reaction is tRNA(Arg) + L-arginine + ATP = L-arginyl-tRNA(Arg) + AMP + diphosphate. The protein is Arginine--tRNA ligase of Bordetella parapertussis (strain 12822 / ATCC BAA-587 / NCTC 13253).